The primary structure comprises 587 residues: Probable phosphoribomutase (587 aa).

Residues threonine 49, arginine 53, and 149–150 each bind substrate; that span reads SH. Serine 149 acts as the Phosphoserine intermediate in catalysis. 4 residues coordinate Mg(2+): serine 149, aspartate 306, aspartate 308, and aspartate 310. Serine 149 is subject to Phosphoserine. Substrate contacts are provided by residues 310–311, threonine 380, 404–406, and lysine 418; these read DR and EEA.

This sequence belongs to the phosphohexose mutase family. Requires Mg(2+) as cofactor.

It localises to the cytoplasm. Its subcellular location is the nucleus. It catalyses the reaction alpha-D-ribose 1-phosphate = D-ribose 5-phosphate. Functionally, converts ribose 1-phosphate to ribose 5-phosphate. Involved in ribose salvage via the pentose phosphate pathway. In Schizosaccharomyces pombe (strain 972 / ATCC 24843) (Fission yeast), this protein is Probable phosphoribomutase.